A 260-amino-acid chain; its full sequence is MRKLKSFTFIALTAFAITACSGSKDVEQRPEQELYNVGQTHLQNGDYSQAIRYLDAVRSRFPGSSYSEQTLLNLIYANYKTQDYTQTLVLADRFFQQYPTSRNLDYVLYMAGLTNAALGDNYIQDLFRIDRATRESSSIKAAFANFQTLVQNFPNSPYAQDALARMAYIKASLARHELAIAKFYAKRDAHVAVANRVVGMLQQYPDTQATYEALPLMQEAYEKMNLNDLAAKTAAIIEANKGRTFAEIEKPAEPEGLLKQ.

Positions 1 to 19 (MRKLKSFTFIALTAFAITA) are cleaved as a signal peptide. Cys-20 carries the N-palmitoyl cysteine lipid modification. Residue Cys-20 is the site of S-diacylglycerol cysteine attachment.

The protein belongs to the BamD family. As to quaternary structure, part of the Bam complex.

It localises to the cell outer membrane. Part of the outer membrane protein assembly complex, which is involved in assembly and insertion of beta-barrel proteins into the outer membrane. This chain is Outer membrane protein assembly factor BamD, found in Pasteurella multocida (strain Pm70).